A 374-amino-acid polypeptide reads, in one-letter code: Putative serine/threonine-protein kinase ZK507.3 (374 aa).

Residues 25 to 296 (WKVIVELGKG…CKLTLKEPLV (272 aa)) form the Protein kinase domain. Residues 31–39 (LGKGGYGTV) and Lys-60 contribute to the ATP site. Asp-158 (proton acceptor) is an active-site residue. The tract at residues 302–374 (NDNESGSTPT…KTRNKKPSRK (73 aa)) is disordered. Low complexity predominate over residues 306-324 (SGSTPTTSATACSPSSSTG). Polar residues predominate over residues 334 to 343 (IASNIDQKSI). Positions 364-374 (TKTRNKKPSRK) are enriched in basic residues.

The protein belongs to the protein kinase superfamily. Ser/Thr protein kinase family.

It catalyses the reaction L-seryl-[protein] + ATP = O-phospho-L-seryl-[protein] + ADP + H(+). The enzyme catalyses L-threonyl-[protein] + ATP = O-phospho-L-threonyl-[protein] + ADP + H(+). The polypeptide is Putative serine/threonine-protein kinase ZK507.3 (Caenorhabditis elegans).